The sequence spans 307 residues: Nucleotide-binding protein ACP_0619 (307 aa).

Positions 1–14 (MPAPEPTRRAKKDA) are enriched in basic and acidic residues. Residues 1 to 23 (MPAPEPTRRAKKDASASPSPAHP) form a disordered region. Residue 33–40 (GLSGAGKG) participates in ATP binding. Residue 83–86 (DVRE) coordinates GTP.

This sequence belongs to the RapZ-like family.

Its function is as follows. Displays ATPase and GTPase activities. This Acidobacterium capsulatum (strain ATCC 51196 / DSM 11244 / BCRC 80197 / JCM 7670 / NBRC 15755 / NCIMB 13165 / 161) protein is Nucleotide-binding protein ACP_0619.